Here is a 217-residue protein sequence, read N- to C-terminus: Uracil-DNA glycosylase (217 aa).

Residue Asp-62 is the Proton acceptor of the active site.

It belongs to the uracil-DNA glycosylase (UDG) superfamily. UNG family.

It is found in the cytoplasm. It catalyses the reaction Hydrolyzes single-stranded DNA or mismatched double-stranded DNA and polynucleotides, releasing free uracil.. Its function is as follows. Excises uracil residues from the DNA which can arise as a result of misincorporation of dUMP residues by DNA polymerase or due to deamination of cytosine. In Streptococcus equi subsp. zooepidemicus (strain H70), this protein is Uracil-DNA glycosylase.